Consider the following 447-residue polypeptide: Probable glycine dehydrogenase (decarboxylating) subunit 1 (447 aa).

It belongs to the GcvP family. N-terminal subunit subfamily. In terms of assembly, the glycine cleavage system is composed of four proteins: P, T, L and H. In this organism, the P 'protein' is a heterodimer of two subunits.

The enzyme catalyses N(6)-[(R)-lipoyl]-L-lysyl-[glycine-cleavage complex H protein] + glycine + H(+) = N(6)-[(R)-S(8)-aminomethyldihydrolipoyl]-L-lysyl-[glycine-cleavage complex H protein] + CO2. In terms of biological role, the glycine cleavage system catalyzes the degradation of glycine. The P protein binds the alpha-amino group of glycine through its pyridoxal phosphate cofactor; CO(2) is released and the remaining methylamine moiety is then transferred to the lipoamide cofactor of the H protein. The sequence is that of Probable glycine dehydrogenase (decarboxylating) subunit 1 from Bacillus anthracis (strain A0248).